We begin with the raw amino-acid sequence, 211 residues long: Urease accessory protein UreF (211 aa).

The segment at 71–93 (DDADRETDARTPAPAARHASRSQ) is disordered.

This sequence belongs to the UreF family. In terms of assembly, ureD, UreF and UreG form a complex that acts as a GTP-hydrolysis-dependent molecular chaperone, activating the urease apoprotein by helping to assemble the nickel containing metallocenter of UreC. The UreE protein probably delivers the nickel.

It is found in the cytoplasm. Required for maturation of urease via the functional incorporation of the urease nickel metallocenter. The sequence is that of Urease accessory protein UreF from Mycobacterium tuberculosis (strain ATCC 25177 / H37Ra).